Consider the following 871-residue polypeptide: Protein pob1 (871 aa).

The region spanning 2-65 is the SH3 domain; sequence ASQRFVIALH…PASHVELISD (64 aa). The disordered stretch occupies residues 42–168; the sequence is WWEGEDEQGN…PSSDLSNFNT (127 aa). A compositionally biased stretch (basic and acidic residues) spans 62 to 80; the sequence is LISDERSDSSDSRRGKEDF. Composition is skewed to low complexity over residues 88–100 and 109–124; these read TRSSLSSSRSTSS and LYSNNSLSSSHSSILN. The segment covering 131 to 168 has biased composition (polar residues); sequence SKPSVPSNFNSMFPSSKQEGPSPLLDNQPSSDLSNFNT. Phosphoserine occurs at positions 224 and 225. Residue tyrosine 229 is modified to Phosphotyrosine. At serine 241 the chain carries Phosphoserine. Positions 250-313 constitute an SAM domain; sequence WSTEEVVEWL…LRKIQQLKDS (64 aa). A compositionally biased stretch (low complexity) spans 329–343; it reads ISVSQSSDSSSSIPK. 2 disordered regions span residues 329–371 and 384–670; these read ISVS…NRPT and PDLD…KSKR. Composition is skewed to polar residues over residues 384-395 and 404-451; these read PDLDSSPSTDWN and TPSS…NSGL. 3 positions are modified to phosphoserine: serine 433, serine 439, and serine 440. A Phosphothreonine modification is found at threonine 442. Residue serine 444 is modified to Phosphoserine. Residues 456–467 show a composition bias toward low complexity; that stretch reads TEPISSPSTSSI. The segment covering 492-511 has biased composition (polar residues); the sequence is QPSSNVPTKFTGGASESSSV. Phosphoserine is present on serine 549. Residues 549–560 are compositionally biased toward low complexity; sequence SPSSISSRLPSS. 2 stretches are compositionally biased toward polar residues: residues 561 to 574 and 583 to 606; these read NLEQGSSSSVTKSP and KASSPVTSKGVSINEKSAVNNYAT. Residues 698-808 enclose the PH domain; it reads TADCHGWMRK…WSSAFLKATV (111 aa).

The protein resides in the cytoplasm. It is found in the membrane. Its function is as follows. Has a role in cell elongation and separation. The sequence is that of Protein pob1 (pob1) from Schizosaccharomyces pombe (strain 972 / ATCC 24843) (Fission yeast).